The sequence spans 182 residues: ATP synthase subunit b, chloroplastic (182 aa).

A helical membrane pass occupies residues 33–55 (VLNIMLLLFGLIYVLKQFLGSLL).

Belongs to the ATPase B chain family. As to quaternary structure, F-type ATPases have 2 components, F(1) - the catalytic core - and F(0) - the membrane proton channel. F(1) has five subunits: alpha(3), beta(3), gamma(1), delta(1), epsilon(1). F(0) has four main subunits: a(1), b(1), b'(1) and c(10-14). The alpha and beta chains form an alternating ring which encloses part of the gamma chain. F(1) is attached to F(0) by a central stalk formed by the gamma and epsilon chains, while a peripheral stalk is formed by the delta, b and b' chains.

It localises to the plastid. It is found in the chloroplast thylakoid membrane. Its function is as follows. F(1)F(0) ATP synthase produces ATP from ADP in the presence of a proton or sodium gradient. F-type ATPases consist of two structural domains, F(1) containing the extramembraneous catalytic core and F(0) containing the membrane proton channel, linked together by a central stalk and a peripheral stalk. During catalysis, ATP synthesis in the catalytic domain of F(1) is coupled via a rotary mechanism of the central stalk subunits to proton translocation. Functionally, component of the F(0) channel, it forms part of the peripheral stalk, linking F(1) to F(0). The chain is ATP synthase subunit b, chloroplastic from Antithamnion sp. (Red alga).